The chain runs to 938 residues: Isoleucine--tRNA ligase (938 aa).

A 'HIGH' region motif is present at residues proline 58–histidine 68. L-isoleucyl-5'-AMP is bound at residue glutamate 561. Positions lysine 602–serine 606 match the 'KMSKS' region motif. ATP is bound at residue lysine 605. Zn(2+) contacts are provided by cysteine 901, cysteine 904, cysteine 921, and cysteine 924.

Belongs to the class-I aminoacyl-tRNA synthetase family. IleS type 1 subfamily. Monomer. Requires Zn(2+) as cofactor.

The protein resides in the cytoplasm. It catalyses the reaction tRNA(Ile) + L-isoleucine + ATP = L-isoleucyl-tRNA(Ile) + AMP + diphosphate. In terms of biological role, catalyzes the attachment of isoleucine to tRNA(Ile). As IleRS can inadvertently accommodate and process structurally similar amino acids such as valine, to avoid such errors it has two additional distinct tRNA(Ile)-dependent editing activities. One activity is designated as 'pretransfer' editing and involves the hydrolysis of activated Val-AMP. The other activity is designated 'posttransfer' editing and involves deacylation of mischarged Val-tRNA(Ile). The sequence is that of Isoleucine--tRNA ligase from Cronobacter sakazakii (strain ATCC BAA-894) (Enterobacter sakazakii).